A 448-amino-acid chain; its full sequence is Glutamyl-tRNA reductase (448 aa).

Substrate-binding positions include 49 to 52 (TCNR), serine 109, 114 to 116 (ETQ), and glutamine 120. Residue cysteine 50 is the Nucleophile of the active site. NADP(+) is bound at residue 189 to 194 (GAGEMG).

Belongs to the glutamyl-tRNA reductase family. In terms of assembly, homodimer.

It carries out the reaction (S)-4-amino-5-oxopentanoate + tRNA(Glu) + NADP(+) = L-glutamyl-tRNA(Glu) + NADPH + H(+). Its pathway is porphyrin-containing compound metabolism; protoporphyrin-IX biosynthesis; 5-aminolevulinate from L-glutamyl-tRNA(Glu): step 1/2. Functionally, catalyzes the NADPH-dependent reduction of glutamyl-tRNA(Glu) to glutamate 1-semialdehyde (GSA). In Staphylococcus epidermidis (strain ATCC 35984 / DSM 28319 / BCRC 17069 / CCUG 31568 / BM 3577 / RP62A), this protein is Glutamyl-tRNA reductase.